The chain runs to 425 residues: Adenosylhomocysteinase (425 aa).

Residues Thr60, Asp132, and Glu157 each coordinate substrate. Thr158–Thr160 is an NAD(+) binding site. The substrate site is built by Lys187 and Asp191. Residues Asn192, Gly221–Gly226, Glu244, Asn279, Ser300–His302, and Asn347 each bind NAD(+).

It belongs to the adenosylhomocysteinase family. NAD(+) serves as cofactor.

Its subcellular location is the cytoplasm. It carries out the reaction S-adenosyl-L-homocysteine + H2O = L-homocysteine + adenosine. It functions in the pathway amino-acid biosynthesis; L-homocysteine biosynthesis; L-homocysteine from S-adenosyl-L-homocysteine: step 1/1. May play a key role in the regulation of the intracellular concentration of adenosylhomocysteine. The polypeptide is Adenosylhomocysteinase (Nostoc sp. (strain PCC 7120 / SAG 25.82 / UTEX 2576)).